Here is a 351-residue protein sequence, read N- to C-terminus: MVLTKYKAAAVTSEPCWFDLEGGVRKTIDFINEAGQAGCKLVAFPEVWIPGYPYWMWKVTYQQSLPMLKKYRENAMAVDSDEFRRIRRAARDNQIYVSLGFAEIDHATLYLAQALIDPTGEVINHRRKIKPTHVEKLVYGDGAGDTFMSVTPTELGRLGQLNCWENMNPFLKSLNVSMGEQIHIAAWPIYPGKETLKYPDPATNVADPASDLVTPAYAIETGTWTLAPFQRLSVEGLKKNTPEGVEPETDPSTYNGHARIYRPDGSLVVRPDKDFDGLLFVDIDLNECHLTKALADFAGHYMRPDLIRLLVDTSRKELVTEVDRNGGIVQYSTRERLGLNTPLENDKEGKK.

Residues 6-285 (YKAAAVTSEP…DGLLFVDIDL (280 aa)) enclose the CN hydrolase domain. Glu46 acts as the Proton acceptor in catalysis. Residue Lys128 is part of the active site. The active-site Nucleophile is Cys163.

Belongs to the carbon-nitrogen hydrolase superfamily. Nitrilase family. In terms of assembly, oligomer of dimers, forming left-handed helical fibers with a diameter of 13 nm but with lengths ranging from approximately 1 um at the leading edge of the peak to having approximately the same length and diameter at the trailing edge.

It carries out the reaction formamide = hydrogen cyanide + H2O. Its function is as follows. Catalyzes the hydration of cyanide to formamide. Degradation of cyanide may be important for plant pathogenic fungi in infection of cyanogenic plants. This Neurospora crassa (strain ATCC 24698 / 74-OR23-1A / CBS 708.71 / DSM 1257 / FGSC 987) protein is Cyanide hydratase.